A 170-amino-acid polypeptide reads, in one-letter code: Photosystem I assembly protein Ycf3 (170 aa).

3 TPR repeats span residues 35 to 68, 72 to 105, and 120 to 153; these read AFTH…EIDP, SYIL…NSSL, and GEQA…APSN.

This sequence belongs to the Ycf3 family.

Its subcellular location is the plastid. It localises to the chloroplast thylakoid membrane. Essential for the assembly of the photosystem I (PSI) complex. May act as a chaperone-like factor to guide the assembly of the PSI subunits. In Anthoceros angustus (Hornwort), this protein is Photosystem I assembly protein Ycf3.